A 269-amino-acid chain; its full sequence is MKIALGIEYNGQNYYGWQRQEKVRSVQEELEKALSHIANEKIDIFCAGRTDSGVSGTGQVVHFETNAIRPEKAWAFGTNAHLPDDIAVAWAKQVDDEFHARFSATARRYRYILYCNKLRSAILAGGITHCHLDLDAEKMHQAGQCLLGEQDFSSFRAAQCQSHTPWRNVHHLNVSRIGKYIIVDIQANAFVHHMVRNIVGSLIEVGAGNQPIEWMQWLLEQKNRQLAAPTAKPDGLYLVDVIYPQKFDIPKRPIGPLFLEDGLLNRPLK.

The active-site Nucleophile is the D51. Y109 contacts substrate.

The protein belongs to the tRNA pseudouridine synthase TruA family. As to quaternary structure, homodimer.

The catalysed reaction is uridine(38/39/40) in tRNA = pseudouridine(38/39/40) in tRNA. Functionally, formation of pseudouridine at positions 38, 39 and 40 in the anticodon stem and loop of transfer RNAs. The chain is tRNA pseudouridine synthase A from Haemophilus influenzae (strain PittGG).